Consider the following 552-residue polypeptide: Sensor histidine kinase DpiB (552 aa).

Over 1–21 (MLQLNENKQFAFFQRLAFPLR) the chain is Cytoplasmic. The helical transmembrane segment at 22 to 42 (IFLLILVFSIFVIAALAQYFT) threads the bilayer. At 43–182 (ASFEDYLTLH…DSWRAEFLLP (140 aa)) the chain is on the periplasmic side. A helical transmembrane segment spans residues 183 to 203 (MAGVFVVLLGILMLLSWFLAA). The Cytoplasmic segment spans residues 204–552 (HIRRQMMGME…NDSSINPIDR (349 aa)). A PAS domain is found at 222–292 (RQQEALFSSV…IDEKRQDVVA (71 aa)). The region spanning 344–541 (TLRHEHLNWM…LFSIYIPKVK (198 aa)) is the Histidine kinase domain. At H347 the chain carries Phosphohistidine; by autocatalysis.

Autophosphorylated.

The protein localises to the cell inner membrane. It carries out the reaction ATP + protein L-histidine = ADP + protein N-phospho-L-histidine.. Its activity is regulated as follows. Autophosphorylation is induced in vitro by dithiothreitol (DTT). Functionally, member of the two-component regulatory system DpiA/DpiB, which is essential for expression of citrate-specific fermentation genes and genes involved in plasmid inheritance. Could be involved in response to both the presence of citrate and external redox conditions. Functions as a sensor kinase that phosphorylates DpiA in the presence of citrate. The chain is Sensor histidine kinase DpiB (dpiB) from Escherichia coli (strain K12).